Consider the following 443-residue polypeptide: Ribosomal protein uS12 methylthiotransferase RimO (443 aa).

One can recognise an MTTase N-terminal domain in the interval 11–121; that stretch reads PTVGFVSLGC…VMEAVHGALP (111 aa). Residues Cys20, Cys56, Cys85, Cys152, Cys156, and Cys159 each contribute to the [4Fe-4S] cluster site. In terms of domain architecture, Radical SAM core spans 138–375; sequence LTPRHYAYLK…METQAEISAA (238 aa). A TRAM domain is found at 378 to 443; the sequence is DAKIGRTIEV…DAHDLWATPV (66 aa).

It belongs to the methylthiotransferase family. RimO subfamily. Requires [4Fe-4S] cluster as cofactor.

It is found in the cytoplasm. It catalyses the reaction L-aspartate(89)-[ribosomal protein uS12]-hydrogen + (sulfur carrier)-SH + AH2 + 2 S-adenosyl-L-methionine = 3-methylsulfanyl-L-aspartate(89)-[ribosomal protein uS12]-hydrogen + (sulfur carrier)-H + 5'-deoxyadenosine + L-methionine + A + S-adenosyl-L-homocysteine + 2 H(+). In terms of biological role, catalyzes the methylthiolation of an aspartic acid residue of ribosomal protein uS12. The polypeptide is Ribosomal protein uS12 methylthiotransferase RimO (Thiobacillus denitrificans (strain ATCC 25259 / T1)).